A 238-amino-acid chain; its full sequence is Segregation and condensation protein A (238 aa).

The protein belongs to the ScpA family. As to quaternary structure, component of a cohesin-like complex composed of ScpA, ScpB and the Smc homodimer, in which ScpA and ScpB bind to the head domain of Smc. The presence of the three proteins is required for the association of the complex with DNA.

The protein localises to the cytoplasm. Participates in chromosomal partition during cell division. May act via the formation of a condensin-like complex containing Smc and ScpB that pull DNA away from mid-cell into both cell halves. In Macrococcus caseolyticus (strain JCSC5402) (Macrococcoides caseolyticum), this protein is Segregation and condensation protein A.